The chain runs to 771 residues: Solute carrier family 7 member 14 (771 aa).

The next 6 helical transmembrane spans lie at 58-78 (LISL…SGLV), 83-103 (AGPG…LSGV), 119-141 (AYTY…NLIL), 187-207 (YPDL…ALGV), 216-236 (VLNV…LFFI), and 251-271 (WSGV…FDII). The N-linked (GlcNAc...) asparagine glycan is linked to Asn-282. 5 consecutive transmembrane segments (helical) span residues 291 to 311 (ASLV…TLMV), 336 to 356 (FVVA…SLFP), 360 to 380 (VIYA…VSSY), 384 to 404 (PVVA…LVSL), and 407 to 427 (LIEM…VCVL). Residues Ser-465, Ser-468, and Ser-488 each carry the phosphoserine modification. Helical transmembrane passes span 565-585 (VTIC…FIIF), 596-616 (WAIL…FVIL), 628-648 (MAPC…YLML), and 655-675 (WIRF…YGIW). N-linked (GlcNAc...) asparagine glycosylation occurs at Asn-676. Residues 736 to 771 (DAKANGRTSSKAKSKSKHKQNSEALIANDELDYSPE) form a disordered region. The span at 745–754 (SKAKSKSKHK) shows a compositional bias: basic residues. Phosphoserine occurs at positions 757 and 769.

This sequence belongs to the amino acid-polyamine-organocation (APC) superfamily. Cationic amino acid transporter (CAT) (TC 2.A.3.3) family. As to expression, expressed in skin fibroblasts.

The protein resides in the lysosome membrane. The catalysed reaction is 4-aminobutanoate(in) = 4-aminobutanoate(out). Functionally, imports 4-aminobutanoate (GABA) into lysosomes. May act as a GABA sensor that regulates mTORC2-dependent INS signaling and gluconeogenesis. The transport mechanism and substrate selectivity remain to be elucidated. In Homo sapiens (Human), this protein is Solute carrier family 7 member 14.